A 318-amino-acid chain; its full sequence is Probable ABC transporter permease protein MG189 (318 aa).

6 helical membrane passes run 42-62 (VLGF…VVSF), 98-118 (AIVV…FFTI), 134-154 (LVWF…LIGQ), 169-189 (PLIV…GFMY), 230-250 (VGIL…LLLG), and 282-302 (LKMS…FLFH). Residues 99–301 (IVVNTLVTVL…LPMFIIYFLF (203 aa)) form the ABC transmembrane type-1 domain.

This sequence belongs to the binding-protein-dependent transport system permease family. MalFG subfamily.

The protein localises to the cell membrane. Probably part of a binding-protein-dependent transport system. Probably responsible for the translocation of the substrate across the membrane. This chain is Probable ABC transporter permease protein MG189, found in Mycoplasma genitalium (strain ATCC 33530 / DSM 19775 / NCTC 10195 / G37) (Mycoplasmoides genitalium).